The following is a 290-amino-acid chain: Signal recognition particle receptor FtsY (290 aa).

GTP is bound by residues 91–98, 173–177, and 237–240; these read GTNGSGKT, DTSGR, and TKVD.

Belongs to the GTP-binding SRP family. FtsY subfamily. In terms of assembly, part of the signal recognition particle protein translocation system, which is composed of SRP and FtsY.

The protein resides in the cell inner membrane. The protein localises to the cytoplasm. The catalysed reaction is GTP + H2O = GDP + phosphate + H(+). Involved in targeting and insertion of nascent membrane proteins into the cytoplasmic membrane. Acts as a receptor for the complex formed by the signal recognition particle (SRP) and the ribosome-nascent chain (RNC). This Chlamydia pneumoniae (Chlamydophila pneumoniae) protein is Signal recognition particle receptor FtsY.